Reading from the N-terminus, the 118-residue chain is Myotrophin (118 aa).

C2 is subject to N-acetylcysteine. The ANK 1 repeat unit spans residues C2–R30. K4, K11, and K24 each carry N6-acetyllysine. A Phosphothreonine modification is found at T31. 2 ANK repeats span residues G34–K66 and H67–P99.

Belongs to the myotrophin family. As to quaternary structure, interacts with RELA. Interacts with the heterodimer formed by CAPZA1 and CAPZB.

The protein resides in the cytoplasm. The protein localises to the nucleus. It localises to the perinuclear region. Functionally, promotes dimerization of NF-kappa-B subunits and regulates NF-kappa-B transcription factor activity. Promotes growth of cardiomyocytes, but not cardiomyocyte proliferation. Promotes cardiac muscle hypertrophy. Plays a role in the regulation of the growth of actin filaments. Inhibits the activity of the F-actin-capping protein complex formed by the CAPZA1 and CAPZB heterodimer. The protein is Myotrophin (MTPN) of Bos taurus (Bovine).